We begin with the raw amino-acid sequence, 132 residues long: ATP synthase epsilon chain (132 aa).

The protein belongs to the ATPase epsilon chain family. As to quaternary structure, F-type ATPases have 2 components, CF(1) - the catalytic core - and CF(0) - the membrane proton channel. CF(1) has five subunits: alpha(3), beta(3), gamma(1), delta(1), epsilon(1). CF(0) has three main subunits: a, b and c.

It localises to the cell membrane. Produces ATP from ADP in the presence of a proton gradient across the membrane. The protein is ATP synthase epsilon chain of Desulfitobacterium hafniense (strain DSM 10664 / DCB-2).